A 587-amino-acid chain; its full sequence is Aspartate--tRNA ligase (587 aa).

Position 174 (glutamate 174) interacts with L-aspartate. Positions 198 to 201 are aspartate; it reads QITK. Residue arginine 220 participates in L-aspartate binding. ATP is bound by residues 220-222 and glutamine 229; that span reads RDE. Histidine 443 is an L-aspartate binding site. Glutamate 477 lines the ATP pocket. Arginine 484 contributes to the L-aspartate binding site. 529–532 is an ATP binding site; sequence GLDR.

Belongs to the class-II aminoacyl-tRNA synthetase family. Type 1 subfamily. Homodimer.

The protein localises to the cytoplasm. It catalyses the reaction tRNA(Asp) + L-aspartate + ATP = L-aspartyl-tRNA(Asp) + AMP + diphosphate. Its function is as follows. Catalyzes the attachment of L-aspartate to tRNA(Asp) in a two-step reaction: L-aspartate is first activated by ATP to form Asp-AMP and then transferred to the acceptor end of tRNA(Asp). The protein is Aspartate--tRNA ligase of Streptococcus pneumoniae serotype 2 (strain D39 / NCTC 7466).